Consider the following 1337-residue polypeptide: Protein HEG homolog 1 (1337 aa).

The signal sequence occupies residues 1–31; the sequence is MATPRAPRWPPPSLLLLLLLPLLLLPPAAPG. 2 stretches are compositionally biased toward low complexity: residues 28-40 and 54-66; these read AAPG…PSPA and PGAG…PGVA. 6 disordered regions span residues 28-149, 175-211, 235-296, 313-675, 723-767, and 860-909; these read AAPG…SNMA, SSLL…GFLE, ASHP…QNPS, VPRT…PSPI, LIPS…TVSL, and EGNR…PQTT. Over 32–1204 the chain is Extracellular; that stretch reads ARGSLPSPAH…GLNCGNPYQL (1173 aa). Residues 118 to 131 show a composition bias toward polar residues; that stretch reads TAQNARMSHSSSEG. The segment covering 175 to 190 has biased composition (low complexity); the sequence is SSLLSLESLPESPSSS. Polar residues-rich tracts occupy residues 195–206, 247–258, 283–296, and 340–361; these read RITPSQTESGTS, VLSQKRNSSGQE, IKNG…QNPS, and GITS…NSGL. Residues 470–480 are compositionally biased toward gly residues; it reads RGGGEDSGMGG. Low complexity-rich tracts occupy residues 486–502 and 556–575; these read SSSS…LDSS and SYSE…DSPS. 2 stretches are compositionally biased toward polar residues: residues 576 to 585 and 592 to 617; these read QAQPKQSSMS and AQSS…NMPN. Over residues 637–675 the composition is skewed to low complexity; it reads PSTQPSPSQPQPFSSALPSTRSPGSTSETTTSSPSPSPI. Composition is skewed to polar residues over residues 725–742 and 751–763; these read PSNQ…QQEK and SLVS…TKAV. Over residues 868 to 884 the composition is skewed to low complexity; the sequence is PTTQPIPLTTSTTSAGE. Basic and acidic residues predominate over residues 885-896; that stretch reads RTTELGRAEESS. Residues 897 to 909 are compositionally biased toward polar residues; sequence PSHFLTPSSPQTT. The 39-residue stretch at 941–979 folds into the EGF-like 1 domain; it reads PVNSCTVNPCLHDGKCIVDLTGRGYRCVCPPAWQGENCS. 6 cysteine pairs are disulfide-bonded: C945-C956, C950-C967, C969-C978, C985-C996, C990-C1005, and C1007-C1018. The 39-residue stretch at 981-1019 folds into the EGF-like 2; calcium-binding domain; the sequence is DVNECLSSPCPPLATCNNTQGSFTCRCPVGYQLEKGICN. Residue N1093 is glycosylated (N-linked (GlcNAc...) asparagine). A helical transmembrane segment spans residues 1205-1225; it reads ITVVIAAAGGGLLLILGVALI. Over 1226-1337 the chain is Cytoplasmic; it reads VTCCRKSKND…SDESRRRDYF (112 aa). At S1315 the chain carries Phosphoserine.

As to quaternary structure, interacts with CCM2 and KRIT1; KRIT1 markedly facilitates interaction with CCM2.

It localises to the cell membrane. The protein localises to the cell junction. Its function is as follows. Receptor component of the CCM signaling pathway which is a crucial regulator of heart and vessel formation and integrity. May be acting by stabilizing endothelial cell junctions. This chain is Protein HEG homolog 1 (Heg1), found in Mus musculus (Mouse).